A 64-amino-acid chain; its full sequence is Sperm protamine P1 (64 aa).

Residues 1-64 (MARYRHSRSR…SRRRRRRYYY (64 aa)) form a disordered region.

The protein belongs to the protamine P1 family. In terms of tissue distribution, testis.

The protein resides in the nucleus. It localises to the chromosome. Functionally, protamines substitute for histones in the chromatin of sperm during the haploid phase of spermatogenesis. They compact sperm DNA into a highly condensed, stable and inactive complex. In Hypsiprymnodon moschatus (Musky rat kangaroo), this protein is Sperm protamine P1 (PRM1).